We begin with the raw amino-acid sequence, 776 residues long: Serine/threonine-protein kinase-like protein CCR2 (776 aa).

Residues M1–A22 form the signal peptide. Over Y23 to L432 the chain is Extracellular. N-linked (GlcNAc...) asparagine glycans are attached at residues N59, N92, N154, N162, N205, N278, N287, and N350. The stretch at N341–C396 is one TNFR-Cys repeat. Cystine bridges form between C342–C371, C374–C388, and C378–C396. N404 carries N-linked (GlcNAc...) asparagine glycosylation. The helical transmembrane segment at V433–I453 threads the bilayer. At P454 to F776 the chain is on the cytoplasmic side. Positions F519–F776 constitute a Protein kinase domain. ATP is bound by residues L525–V533 and K547. Residue D644 is the Proton acceptor of the active site.

This sequence belongs to the protein kinase superfamily. Ser/Thr protein kinase family. In terms of assembly, homodimer. Expressed in roots, leaves, shoot apical meristems (SAM), and floral buds.

The protein localises to the membrane. It carries out the reaction L-seryl-[protein] + ATP = O-phospho-L-seryl-[protein] + ADP + H(+). The catalysed reaction is L-threonyl-[protein] + ATP = O-phospho-L-threonyl-[protein] + ADP + H(+). In terms of biological role, serine/threonine-protein kinase with low activity. The protein is Serine/threonine-protein kinase-like protein CCR2 (CCR2) of Arabidopsis thaliana (Mouse-ear cress).